Reading from the N-terminus, the 1107-residue chain is Integrator complex subunit 6 homolog (1107 aa).

The 194-residue stretch at 2-195 (LITFVVDTSG…LPMEPAIAPM (194 aa)) folds into the VWFA domain. Disordered stretches follow at residues 454–515 (RIIN…SGNL), 542–572 (DNET…SSNI), 629–801 (TLRD…VSSP), 818–861 (QISS…IVNN), and 946–1034 (VVRP…TTPN). 2 stretches are compositionally biased toward low complexity: residues 460-513 (QQQQ…SGSG) and 546-562 (SENS…STTG). Over residues 629–639 (TLRDIDDDKKP) the composition is skewed to basic and acidic residues. Over residues 693–801 (PSLPTLNSLS…PIPSTTVSSP (109 aa)) the composition is skewed to low complexity. Over residues 846-857 (SPPPPPPPPPLP) the composition is skewed to pro residues. Residues 956–975 (PLTIDTLTSSSSSSTIPTTT) show a composition bias toward low complexity. Positions 976-996 (NGSLSTHDTPNTSPTLSSINY) are enriched in polar residues. Positions 997–1034 (NNNNNNNNNNNNNNNNNNNNNNNNNNRKNSIITTTTPN) are enriched in low complexity. The region spanning 1041-1103 (IKFVHKEIRR…SLISKLIGYI (63 aa)) is the MIF4G domain.

It belongs to the Integrator subunit 6 family. As to quaternary structure, component of the Integrator complex. The core complex associates with protein phosphatase 2A subunits, to form the Integrator-PP2A (INTAC) complex.

It is found in the nucleus. Its subcellular location is the chromosome. Functionally, component of the integrator complex, a multiprotein complex that terminates RNA polymerase II (Pol II) transcription in the promoter-proximal region of genes. The integrator complex provides a quality checkpoint during transcription elongation by driving premature transcription termination of transcripts that are unfavorably configured for transcriptional elongation: the complex terminates transcription by (1) catalyzing dephosphorylation of the C-terminal domain (CTD) of Pol II subunit polr2a, (2) degrading the exiting nascent RNA transcript via endonuclease activity and (3) promoting the release of Pol II from bound DNA. The integrator complex is also involved in terminating the synthesis of non-coding Pol II transcripts, such as enhancer RNAs (eRNAs), small nuclear RNAs (snRNAs), telomerase RNAs and long non-coding RNAs (lncRNAs). Within the integrator complex, INTS6 acts as a molecular adapter that promotes assembly of protein phosphatase 2A (PP2A) subunits to the integrator core complex, promoting recruitment of PP2A to transcription pause-release checkpoint. This is Integrator complex subunit 6 homolog (ints6) from Dictyostelium discoideum (Social amoeba).